A 490-amino-acid chain; its full sequence is Cysteine--tRNA ligase (490 aa).

Residue C31 participates in Zn(2+) binding. Positions 33–43 match the 'HIGH' region motif; sequence PTVYGDAHLGH. The Zn(2+) site is built by C226, H251, and E255. The 'KMSKS' region motif lies at 283–287; that stretch reads KMGKS. An ATP-binding site is contributed by K286.

It belongs to the class-I aminoacyl-tRNA synthetase family. As to quaternary structure, monomer. Requires Zn(2+) as cofactor.

The protein localises to the cytoplasm. It carries out the reaction tRNA(Cys) + L-cysteine + ATP = L-cysteinyl-tRNA(Cys) + AMP + diphosphate. This chain is Cysteine--tRNA ligase, found in Porphyromonas gingivalis (strain ATCC BAA-308 / W83).